The chain runs to 213 residues: Pyrrolidone-carboxylate peptidase (213 aa).

Catalysis depends on residues glutamate 78, cysteine 141, and histidine 165.

The protein belongs to the peptidase C15 family. As to quaternary structure, homotetramer.

It is found in the cytoplasm. It catalyses the reaction Release of an N-terminal pyroglutamyl group from a polypeptide, the second amino acid generally not being Pro.. Removes 5-oxoproline from various penultimate amino acid residues except L-proline. This Enterococcus faecalis (strain ATCC 700802 / V583) protein is Pyrrolidone-carboxylate peptidase.